The following is a 323-amino-acid chain: Aldo-keto reductase family 1 member C13 (323 aa).

NAD(+) is bound by residues 20–24 (GFGTY), Asp-50, and Tyr-55. Tyr-55 functions as the Proton donor in the catalytic mechanism. Position 117 (His-117) interacts with substrate. NAD(+)-binding positions include 166-167 (SN), Gln-190, 216-224 (YGALGTQRY), and 270-280 (QSFKENEMREN).

It belongs to the aldo/keto reductase family.

Its function is as follows. Catalyzes the dehydrogenation of 17-beta-hydroxysteroids. May also exhibit significant activity with a variety of cyclic and alicyclic alcohols. Uses both NAD and NADP, but the activity is much greater with NAD than with NADP. The chain is Aldo-keto reductase family 1 member C13 (Akr1c13) from Mus musculus (Mouse).